The chain runs to 747 residues: Ferrichrome outer membrane transporter/phage receptor (747 aa).

The N-terminal stretch at 1 to 33 (MARSKTAQPKHSLRKIAVVVATAVSGMSVYAQA) is a signal peptide. Residues 34–192 (AVEPKEDTIT…NMVSKRPTTE (159 aa)) are Periplasmic-facing. A TonB box motif is present at residues 40–47 (DTITVTAA). The 113-residue stretch at 75–187 (PIQKVPQSIS…PGGLLNMVSK (113 aa)) folds into the TBDR plug domain. Ferrichrome-binding positions include R114, Q133, and 148-149 (FY). One can recognise a TBDR beta-barrel domain in the interval 192-747 (EPLKEVQFKA…QVVATATFRF (556 aa)). A beta stranded membrane pass occupies residues 193–201 (PLKEVQFKA). Residues 202-206 (GTDSL) lie on the Extracellular side of the membrane. The chain crosses the membrane as a beta stranded span at residues 207 to 215 (FQTGFDFSD). Residues 216-222 (SLDDDGV) lie on the Periplasmic side of the membrane. The beta stranded transmembrane segment at 223-231 (YSYRLTGLA) threads the bilayer. Over 232 to 245 (RSANAQQKGSEEQR) the chain is Extracellular. The chain crosses the membrane as a beta stranded span at residues 246–255 (YAIAPAFTWR). Topologically, residues 256 to 259 (PDDK) are periplasmic. A beta stranded membrane pass occupies residues 260 to 268 (TNFTFLSYF). The Extracellular portion of the chain corresponds to 269-312 (QNEPETGYYGWLPKEGTVEPLPNGKRLPTDFNEGAKNNTYSRNE). Residue 277–279 (YGW) participates in ferrichrome binding. The chain crosses the membrane as a beta stranded span at residues 313 to 321 (KMVGYSFDH). The Periplasmic portion of the chain corresponds to 322–326 (EFNDT). The beta stranded transmembrane segment at 327 to 335 (FTVRQNLRF) threads the bilayer. At 336 to 387 (AENKTSQNSVYGYGVCSDPANAYSKQCAALAPADKGHYLARKYVVDDEKLQN) the chain is on the extracellular side. Position 346-348 (346-348 (YGY)) interacts with ferrichrome. A disulfide bridge links C351 with C362. The beta stranded transmembrane segment at 388 to 396 (FSVDTQLQS) threads the bilayer. Residues 397 to 404 (KFATGDID) are Periplasmic-facing. The beta stranded transmembrane segment at 405 to 413 (HTLLTGVDF) threads the bilayer. Over 414-464 (MRMRNDINAWFGYDDSVPLLNLYNPVNTDFDFNAKDPANSGPYRILNKQKQ) the chain is Extracellular. F424 is a ferrichrome binding site. The chain crosses the membrane as a beta stranded span at residues 465-473 (TGVYVQDQA). Residues 474-477 (QWDK) lie on the Periplasmic side of the membrane. A beta stranded transmembrane segment spans residues 478–486 (VLVTLGGRY). At 487-508 (DWADQESLNRVAGTTDKRDDKQ) the chain is on the extracellular side. The chain crosses the membrane as a beta stranded span at residues 509-517 (FTWRGGVNY). Topologically, residues 518–522 (LFDNG) are periplasmic. The beta stranded transmembrane segment at 523–531 (VTPYFSYSE) threads the bilayer. Residues 532 to 551 (SFEPSSQVGKDGNIFAPSKG) are Extracellular-facing. Residues 552–560 (KQYEVGVKY) traverse the membrane as a beta stranded segment. At 561–565 (VPEDR) the chain is on the periplasmic side. Residues 566–574 (PIVVTGAVY) traverse the membrane as a beta stranded segment. At 575–601 (NLTKTNNLMADPEGSFFSVEGGEIRAR) the chain is on the extracellular side. The beta stranded transmembrane segment at 602–610 (GVEIEAKAA) threads the bilayer. At 611–613 (LSA) the chain is on the periplasmic side. Residues 614-622 (SVNVVGSYT) traverse the membrane as a beta stranded segment. Residues 623-645 (YTDAEYTTDTTYKGNTPAQVPKH) lie on the Extracellular side of the membrane. A beta stranded membrane pass occupies residues 646-654 (MASLWADYT). Residues 655-661 (FFDGPLS) lie on the Periplasmic side of the membrane. Residues 662 to 670 (GLTLGTGGR) traverse the membrane as a beta stranded segment. Residues 671-689 (YTGSSYGDPANSFKVGSYT) are Extracellular-facing. The chain crosses the membrane as a beta stranded span at residues 690 to 698 (VVDALVRYD). At 699 to 705 (LARVGMA) the chain is on the periplasmic side. Residues 706–714 (GSNVALHVN) traverse the membrane as a beta stranded segment. Topologically, residues 715-737 (NLFDREYVASCFNTYGCFWGAER) are extracellular. An intrachain disulfide couples C725 to C731. The TonB C-terminal box signature appears at 730–747 (GCFWGAERQVVATATFRF). A ferrichrome-binding site is contributed by A735. Residues 738-746 (QVVATATFR) form a beta stranded membrane-spanning segment. Residue F747 is a topological domain, periplasmic.

This sequence belongs to the TonB-dependent receptor family. Monomer. Interacts with TonB. Interacts with Escherichia phage T5 receptor-binding protein pb5 (RBP-pb5); this interaction is necessary for the entry of the viral genome into the host cell.

The protein resides in the cell outer membrane. Its activity is regulated as follows. Binding of ferrichrome or colicin M enhances the interaction between FhuA and TonB. TonB activates FhuA through interaction with the beta-barrel. In terms of biological role, involved in the uptake of iron in complex with ferrichrome, a hydroxamate-type siderophore. Binds and transports ferrichrome-iron across the outer membrane. In addition to its role in ferrichrome-iron transport, transports the antibiotic albomycin, which is a structural analog of ferrichrome, and acts as a receptor for colicin M, microcin J25 and bacteriophages T1, T5, phi80 and UC-1. The energy source, which is required for all FhuA functions except infection by phage T5, is provided by the inner membrane TonB system. The chain is Ferrichrome outer membrane transporter/phage receptor from Escherichia coli (strain K12).